We begin with the raw amino-acid sequence, 761 residues long: 5-methyltetrahydropteroyltriglutamate--homocysteine methyltransferase (761 aa).

5-methyltetrahydropteroyltri-L-glutamate is bound by residues 16 to 19 and Lys-118; that span reads RELK. L-homocysteine is bound by residues 436 to 438 and Glu-489; that span reads IGS. Residues 436-438 and Glu-489 each bind L-methionine; that span reads IGS. Residues 520–521 and Trp-566 each bind 5-methyltetrahydropteroyltri-L-glutamate; that span reads RC. Residue Asp-604 participates in L-homocysteine binding. An L-methionine-binding site is contributed by Asp-604. Glu-610 serves as a coordination point for 5-methyltetrahydropteroyltri-L-glutamate. Zn(2+) is bound by residues His-646, Cys-648, and Glu-670. His-699 acts as the Proton donor in catalysis. Cys-731 serves as a coordination point for Zn(2+).

Belongs to the vitamin-B12 independent methionine synthase family. Requires Zn(2+) as cofactor.

It carries out the reaction 5-methyltetrahydropteroyltri-L-glutamate + L-homocysteine = tetrahydropteroyltri-L-glutamate + L-methionine. It participates in amino-acid biosynthesis; L-methionine biosynthesis via de novo pathway; L-methionine from L-homocysteine (MetE route): step 1/1. Functionally, catalyzes the transfer of a methyl group from 5-methyltetrahydrofolate to homocysteine resulting in methionine formation. This Vibrio cholerae serotype O1 (strain ATCC 39315 / El Tor Inaba N16961) protein is 5-methyltetrahydropteroyltriglutamate--homocysteine methyltransferase.